A 443-amino-acid polypeptide reads, in one-letter code: Ribosomal protein uS12 methylthiotransferase RimO (443 aa).

In terms of domain architecture, MTTase N-terminal spans 8–118; it reads PKVGFVSLGC…VVNAVHEVVP (111 aa). [4Fe-4S] cluster contacts are provided by Cys17, Cys53, Cys82, Cys151, Cys155, and Cys158. The 239-residue stretch at 137–375 folds into the Radical SAM core domain; sequence LTPRHYAYLK…MAHQQAISAA (239 aa). Residues 378–443 enclose the TRAM domain; sequence QQRIGKEIEV…DEYDMWAEPI (66 aa).

This sequence belongs to the methylthiotransferase family. RimO subfamily. The cofactor is [4Fe-4S] cluster.

The protein resides in the cytoplasm. It carries out the reaction L-aspartate(89)-[ribosomal protein uS12]-hydrogen + (sulfur carrier)-SH + AH2 + 2 S-adenosyl-L-methionine = 3-methylsulfanyl-L-aspartate(89)-[ribosomal protein uS12]-hydrogen + (sulfur carrier)-H + 5'-deoxyadenosine + L-methionine + A + S-adenosyl-L-homocysteine + 2 H(+). Catalyzes the methylthiolation of an aspartic acid residue of ribosomal protein uS12. The protein is Ribosomal protein uS12 methylthiotransferase RimO of Pseudomonas entomophila (strain L48).